Consider the following 491-residue polypeptide: Cobyric acid synthase (491 aa).

The region spanning 251-444 (GITIAVIRLP…LHGLFTNDEF (194 aa)) is the GATase cobBQ-type domain. Residue Cys-329 is the Nucleophile of the active site. Residue His-436 is part of the active site.

The protein belongs to the CobB/CobQ family. CobQ subfamily.

Its pathway is cofactor biosynthesis; adenosylcobalamin biosynthesis. Functionally, catalyzes amidations at positions B, D, E, and G on adenosylcobyrinic A,C-diamide. NH(2) groups are provided by glutamine, and one molecule of ATP is hydrogenolyzed for each amidation. The sequence is that of Cobyric acid synthase from Chloroflexus aggregans (strain MD-66 / DSM 9485).